The chain runs to 143 residues: Large ribosomal subunit protein uL11 (143 aa).

Belongs to the universal ribosomal protein uL11 family. Part of the ribosomal stalk of the 50S ribosomal subunit. Interacts with L10 and the large rRNA to form the base of the stalk. L10 forms an elongated spine to which L12 dimers bind in a sequential fashion forming a multimeric L10(L12)X complex. Post-translationally, one or more lysine residues are methylated.

Forms part of the ribosomal stalk which helps the ribosome interact with GTP-bound translation factors. This chain is Large ribosomal subunit protein uL11, found in Caulobacter sp. (strain K31).